A 143-amino-acid chain; its full sequence is uncharacterized protein (143 aa).

Positions 13–143 (SLQFPHHRPG…QDAAHQCRIQ (131 aa)) are disordered. Residues 17–31 (PHHRPGLRRHRKNTT) show a composition bias toward basic residues. Basic and acidic residues-rich tracts occupy residues 35-48 (AAVD…RGDA), 84-96 (DGRE…AEEK), and 112-133 (EKQH…DHAG). Over residues 134-143 (QDAAHQCRIQ) the composition is skewed to low complexity.

This is an uncharacterized protein from Homo sapiens (Human).